The following is a 248-amino-acid chain: MDIVRSPISTLNHIYEISGVEVGQHFYWQIGGFQVHGQVLLTSWVVIAVLLGSATIAVRDPQTIPTGGQNFVEYILEFFRDLTRTQIGEEEYGPWVPFIGTMFLFIFVSNWSGALLPWGILKLPQGELAAPTNDINTTVALALLTSVAYFYAGLTKKGLGYFGKYIQPTPILLPINILEDFTKPLSLSFRLFGNILADELVVAVLVSLVPLIVPIPVMFLGLFTSGIQALIFATLAAAYIGESMEGHH.

5 consecutive transmembrane segments (helical) span residues 38 to 58 (QVLL…TIAV), 96 to 116 (VPFI…GALL), 135 to 155 (INTT…AGLT), 200 to 220 (LVVA…VMFL), and 221 to 241 (GLFT…AYIG).

It belongs to the ATPase A chain family. F-type ATPases have 2 components, CF(1) - the catalytic core - and CF(0) - the membrane proton channel. CF(1) has five subunits: alpha(3), beta(3), gamma(1), delta(1), epsilon(1). CF(0) has four main subunits: a, b, b' and c.

The protein resides in the plastid. The protein localises to the chloroplast thylakoid membrane. Its function is as follows. Key component of the proton channel; it plays a direct role in the translocation of protons across the membrane. The sequence is that of ATP synthase subunit a, chloroplastic from Pinus thunbergii (Japanese black pine).